Consider the following 377-residue polypeptide: Erythronate-4-phosphate dehydrogenase (377 aa).

Positions 45 and 67 each coordinate substrate. Residues 127–128 (QV), Asp147, and Thr176 each bind NAD(+). Arg209 is an active-site residue. Asp233 is a binding site for NAD(+). Glu238 is a catalytic residue. Residue His255 is the Proton donor of the active site. Gly258 lines the NAD(+) pocket. A substrate-binding site is contributed by Tyr259.

It belongs to the D-isomer specific 2-hydroxyacid dehydrogenase family. PdxB subfamily. As to quaternary structure, homodimer.

Its subcellular location is the cytoplasm. The catalysed reaction is 4-phospho-D-erythronate + NAD(+) = (R)-3-hydroxy-2-oxo-4-phosphooxybutanoate + NADH + H(+). The protein operates within cofactor biosynthesis; pyridoxine 5'-phosphate biosynthesis; pyridoxine 5'-phosphate from D-erythrose 4-phosphate: step 2/5. Its function is as follows. Catalyzes the oxidation of erythronate-4-phosphate to 3-hydroxy-2-oxo-4-phosphonooxybutanoate. This Vibrio vulnificus (strain CMCP6) protein is Erythronate-4-phosphate dehydrogenase.